The chain runs to 336 residues: Succinylglutamate desuccinylase (336 aa).

Positions 59, 62, and 151 each coordinate Zn(2+). The active site involves E215.

This sequence belongs to the AspA/AstE family. Succinylglutamate desuccinylase subfamily. Zn(2+) serves as cofactor.

It catalyses the reaction N-succinyl-L-glutamate + H2O = L-glutamate + succinate. It functions in the pathway amino-acid degradation; L-arginine degradation via AST pathway; L-glutamate and succinate from L-arginine: step 5/5. Functionally, transforms N(2)-succinylglutamate into succinate and glutamate. This chain is Succinylglutamate desuccinylase, found in Pseudomonas fluorescens (strain ATCC BAA-477 / NRRL B-23932 / Pf-5).